Here is a 505-residue protein sequence, read N- to C-terminus: uncharacterized protein (505 aa).

Residues 1–22 (MAILKSALVGFICFLHFFIVNA) form the signal peptide. Asn-25 and Asn-114 each carry an N-linked (GlcNAc...) asparagine glycan. Transmembrane regions (helical) follow at residues 181–201 (LFLN…WSFI), 216–236 (ISGV…YFYF), 266–286 (FLLL…GSLL), 291–311 (ILAG…FISP), and 318–338 (VILF…LWIV). A glycan (N-linked (GlcNAc...) asparagine) is linked at Asn-342. Transmembrane regions (helical) follow at residues 365 to 385 (IVIC…AILI) and 400 to 420 (LLWF…MLTI). Residue Asn-454 is glycosylated (N-linked (GlcNAc...) asparagine).

Belongs to the LU7TM family.

Its subcellular location is the membrane. This is an uncharacterized protein from Schizosaccharomyces pombe (strain 972 / ATCC 24843) (Fission yeast).